Consider the following 149-residue polypeptide: Ribonuclease H (149 aa).

Residues 1–143 (MNQVVIYTDG…ADALANKGVD (143 aa)) form the RNase H type-1 domain. Asp9, Glu47, Asp69, and Asp135 together coordinate Mg(2+).

This sequence belongs to the RNase H family. Monomer. It depends on Mg(2+) as a cofactor.

Its subcellular location is the cytoplasm. It catalyses the reaction Endonucleolytic cleavage to 5'-phosphomonoester.. In terms of biological role, endonuclease that specifically degrades the RNA of RNA-DNA hybrids. This Paracidovorax citrulli (strain AAC00-1) (Acidovorax citrulli) protein is Ribonuclease H.